Here is a 199-residue protein sequence, read N- to C-terminus: Probable adenine phosphoribosyltransferase (199 aa).

Belongs to the purine/pyrimidine phosphoribosyltransferase family. As to quaternary structure, homodimer.

It localises to the cytoplasm. It carries out the reaction AMP + diphosphate = 5-phospho-alpha-D-ribose 1-diphosphate + adenine. It functions in the pathway purine metabolism; AMP biosynthesis via salvage pathway; AMP from adenine: step 1/1. In terms of biological role, catalyzes a salvage reaction resulting in the formation of AMP, that is energically less costly than de novo synthesis. The protein is Probable adenine phosphoribosyltransferase (aprt) of Dictyostelium discoideum (Social amoeba).